A 248-amino-acid chain; its full sequence is MSFVVIIPARYASTRLPGKPLVDINGKPMIVHVLERARESGADRIIVATDHEDVARAVEAAGGEVCMTRADHQSGTERLAEVVEKCAFSDDTVIVNVQGDEPMIPATIIRQVADNLAQRQVGMATLAVPIHNAEEAFNPNAVKVVLDAEGYALYFSRATIPWDRDRFAEGLETVGDNFLRHLGIYGYRAGFIRRYVNWQPSPLEHIEMLEQLRVLWYGEKIHVAVAQEVPGTGVDTPEDLERVRAEMR.

The protein belongs to the KdsB family.

The protein localises to the cytoplasm. It catalyses the reaction 3-deoxy-alpha-D-manno-oct-2-ulosonate + CTP = CMP-3-deoxy-beta-D-manno-octulosonate + diphosphate. The protein operates within nucleotide-sugar biosynthesis; CMP-3-deoxy-D-manno-octulosonate biosynthesis; CMP-3-deoxy-D-manno-octulosonate from 3-deoxy-D-manno-octulosonate and CTP: step 1/1. It participates in bacterial outer membrane biogenesis; lipopolysaccharide biosynthesis. Its function is as follows. Activates KDO (a required 8-carbon sugar) for incorporation into bacterial lipopolysaccharide in Gram-negative bacteria. This Escherichia coli O139:H28 (strain E24377A / ETEC) protein is 3-deoxy-manno-octulosonate cytidylyltransferase.